A 305-amino-acid chain; its full sequence is 2-oxoacid:ferredoxin oxidoreductase subunit beta (305 aa).

Residues Cys-12, Cys-15, and Cys-46 each contribute to the [4Fe-4S] cluster site. Thiamine diphosphate is bound by residues 44–47 (IGCS) and His-65. Asp-90 lines the Mg(2+) pocket. Position 91–92 (91–92 (GD)) interacts with thiamine diphosphate. Residues Asn-118 and Val-120 each contribute to the Mg(2+) site. 122 to 123 (GL) is a binding site for thiamine diphosphate. Cys-197 contacts [4Fe-4S] cluster.

Heterodimer composed of an alpha and a beta subunit. Requires [4Fe-4S] cluster as cofactor. It depends on thiamine diphosphate as a cofactor. Mg(2+) serves as cofactor.

The enzyme catalyses a 2-oxocarboxylate + 2 oxidized [2Fe-2S]-[ferredoxin] + CoA = an acyl-CoA + 2 reduced [2Fe-2S]-[ferredoxin] + CO2 + H(+). Catalyzes the coenzyme A-dependent oxidative decarboxylation of different 2-oxoacids such as 2-oxoglutarate, pyruvate and 2-oxobutyrate to form their CoA derivatives. The polypeptide is 2-oxoacid:ferredoxin oxidoreductase subunit beta (Saccharolobus solfataricus (Sulfolobus solfataricus)).